Reading from the N-terminus, the 548-residue chain is Natural resistance-associated macrophage protein 1 (548 aa).

The disordered stretch occupies residues 1 to 38; the sequence is MPGDMGPPKQGGTRYGSISSPPSPGPQQAPPGGTYLSE. The Cytoplasmic segment spans residues 1–55; the sequence is MPGDMGPPKQGGTRYGSISSPPSPGPQQAPPGGTYLSEKIPIPDTESGAFSLRKL. A helical membrane pass occupies residues 56 to 73; the sequence is WAFTGPGFLMSIAFLDPG. The Extracellular segment spans residues 74-82; sequence NIESDLQAG. Residues 83–102 traverse the membrane as a helical segment; the sequence is AVAGFKLLWVLLWATVLGLL. The Cytoplasmic portion of the chain corresponds to 103 to 139; that stretch reads CQRLAARLGVVTGKDLGEVCHLYYPKVPRILLWLTIE. Residues 140 to 160 form a helical membrane-spanning segment; sequence LAIVGSDMQEVIGTAIAFSLL. Residues 161-164 are Extracellular-facing; that stretch reads SAGR. The helical transmembrane segment at 165 to 184 threads the bilayer; that stretch reads IPLWGGVLITIVDTFFFLFL. Residues 185-193 lie on the Cytoplasmic side of the membrane; that stretch reads DNYGLRKLE. A helical membrane pass occupies residues 194–214; that stretch reads AFFGFLITIMALTFGYEYVVA. Residues 215–237 lie on the Extracellular side of the membrane; sequence RPAQGALLQGLFLPSCAGCGQPE. Residues 238 to 256 traverse the membrane as a helical segment; that stretch reads LLQAVGIVGAIIMPHNIYL. Residues 257–284 lie on the Cytoplasmic side of the membrane; it reads HSSLVKSREVDRSRRADIREANMYFLIE. A helical membrane pass occupies residues 285 to 304; that stretch reads ATIALSVSFLINLFVMAVFG. The Extracellular segment spans residues 305–346; sequence QAFYKQTNQAAFNICANSSLHDYATIFPRNNLTVAVDIYQGG. Residues asparagine 321 and asparagine 335 are each glycosylated (N-linked (GlcNAc...) asparagine). A helical membrane pass occupies residues 347-366; the sequence is VILGCLFGPAALYIWAVGLL. At 367-397 the chain is on the cytoplasmic side; sequence AAGQSSTMTGTYAGQFVMEGFLKLRWSRFAR. A helical transmembrane segment spans residues 398 to 415; sequence VLLTRSCAILPTVLVAVF. At 416-426 the chain is on the extracellular side; it reads RDLRDLSGLND. Residues 427 to 447 form a helical membrane-spanning segment; sequence LLNVLQSLLLPFAVLPILTFT. The Cytoplasmic portion of the chain corresponds to 448–463; that stretch reads SMPAVMQEFANGLVSK. The helical transmembrane segment at 464 to 485 threads the bilayer; sequence VISSSIMVLVCAVNLYFVISYV. Residues 486 to 493 are Extracellular-facing; sequence PSLPHPDY. A helical transmembrane segment spans residues 494–513; the sequence is FSLVALLAAAYLGLTTYLVW. The Cytoplasmic portion of the chain corresponds to 514–548; the sequence is TCLITQGATLLAHSSHQRFLYGLPEEDQENGRTSG.

The protein belongs to the NRAMP family.

The protein localises to the late endosome membrane. Its subcellular location is the lysosome membrane. The enzyme catalyses Zn(2+)(in) + H(+)(out) = Zn(2+)(out) + H(+)(in). It catalyses the reaction Fe(2+)(in) + H(+)(out) = Fe(2+)(out) + H(+)(in). The catalysed reaction is Mn(2+)(in) + H(+)(out) = Mn(2+)(out) + H(+)(in). Macrophage-specific antiporter that fluxes metal ions in either direction against a proton gradient. Localized to late endosomal lysosomal membranes, delivers bivalent cations from the cytosol into these acidic compartments where they may directly affect antimicrobial activity. Involved in iron metabolism and host natural resistance to infection with intracellular parasites. Pathogen resistance involves sequestration of Fe(2+) and Mn(2+), cofactors of both prokaryotic and eukaryotic catalases and superoxide dismutases, not only to protect the macrophage against its own generation of reactive oxygen species, but to deny the cations to the pathogen for synthesis of its protective enzymes. This Cervus elaphus (Red deer) protein is Natural resistance-associated macrophage protein 1 (SLC11A1).